The primary structure comprises 1080 residues: Histone-lysine N-methyltransferase, H3 lysine-4 specific (1080 aa).

Disordered regions lie at residues 1-46, 54-73, and 78-121; these read MSNY…SQYN, NDGT…NNAS, and YATN…SSGS. Residues 1-230 form a binds SWD2 region; sequence MSNYYRRAHA…THRKCRNSLI (230 aa). Polar residues predominate over residues 11–28; it reads SSGSYRQPQEQPQYSRSG. The segment covering 29–46 has biased composition (low complexity); it reads HYQYSNGHSHQQYSSQYN. Positions 54 to 67 are enriched in basic and acidic residues; that stretch reads NDGTRRRYNDDRPH. Composition is skewed to polar residues over residues 78–87 and 99–121; these read YATNNSQSGP and RGMS…SSGS. A binds RNA region spans residues 230-569; it reads ILLPRISYDR…ALDHANFPEL (340 aa). The binds SHG1 stretch occupies residues 356 to 569; the sequence is KKLQKLQENL…ALDHANFPEL (214 aa). Phosphoserine is present on serine 625. Residues 646-729 are disordered; the sequence is AHLLNEETDS…DQNGSSDVLD (84 aa). The span at 674–692 shows a compositional bias: acidic residues; it reads DEEDENMTSSSSEEEEEEA. Residues 693 to 712 are compositionally biased toward basic and acidic residues; it reads PDKKFKSESEPTTPESDHLH. Residues 762 to 938 are binds SPP1; it reads MDLQNAIKDE…SLNQLNKRKK (177 aa). The contributes to RNA binding stretch occupies residues 762 to 938; it reads MDLQNAIKDE…SLNQLNKRKK (177 aa). The tract at residues 762–938 is required for catalytic activity; that stretch reads MDLQNAIKDE…SLNQLNKRKK (177 aa). Threonine 875 is subject to Phosphothreonine. Basic and acidic residues-rich tracts occupy residues 877–890 and 899–909; these read ELCQ…KEPS and SSRDNRASNRR. Positions 877–909 are disordered; that stretch reads ELCQREESSNKEPSDSVPQEVSSSRDNRASNRR. The short motif at 904 to 909 is the RxxxRR motif element; it reads RASNRR. In terms of domain architecture, SET spans 938–1055; sequence KPVMFARSAI…ASEELTYDYK (118 aa). Residue tyrosine 1054 coordinates S-adenosyl-L-methionine. In terms of domain architecture, Post-SET spans 1064 to 1080; the sequence is ERLPCLCGAPNCKGFLN.

It belongs to the class V-like SAM-binding methyltransferase superfamily. As to quaternary structure, component of the Set1C/COMPASS complex which consists of SET1(2), BRE2(2), SPP1(2), SDC1(1), SHG1(1), SWD1(1), SWD2(1), and SWD3(1). Interacts with MEC3.

It localises to the nucleus. The protein localises to the chromosome. It catalyses the reaction L-lysyl(4)-[histone H3] + 3 S-adenosyl-L-methionine = N(6),N(6),N(6)-trimethyl-L-lysyl(4)-[histone H3] + 3 S-adenosyl-L-homocysteine + 3 H(+). The enzyme catalyses N(6)-methyl-L-lysyl(4)-[histone H3] + S-adenosyl-L-methionine = N(6),N(6)-dimethyl-L-lysyl(4)-[histone H3] + S-adenosyl-L-homocysteine + H(+). It carries out the reaction N(6),N(6)-dimethyl-L-lysyl(4)-[histone H3] + S-adenosyl-L-methionine = N(6),N(6),N(6)-trimethyl-L-lysyl(4)-[histone H3] + S-adenosyl-L-homocysteine + H(+). Catalytic component of the COMPASS (Set1C) complex that specifically mono-, di- and trimethylates histone H3 to form H3K4me1/2/3. Binds RNAs involved in chromosome segregation, splicing and transcriptional regulation; appears to bind transcripts both co- and post-transcriptionally and binding might negatively affect its histone methyltransferase activity. COMPASS recognizes ubiquitinated H2B on one face of the nucleosome which stimulates the methylation of H3 on the opposing face. Plays a role in telomere length maintenance and transcription elongation regulation. This Saccharomyces cerevisiae (strain ATCC 204508 / S288c) (Baker's yeast) protein is Histone-lysine N-methyltransferase, H3 lysine-4 specific.